The primary structure comprises 886 residues: Semaphorin-6B (886 aa).

Positions 1–26 are cleaved as a signal peptide; it reads MWTPRVPPPRPALSFFLLLLLGVTYG. Topologically, residues 27–605 are extracellular; sequence LFPEEPPPLS…VSVNLLVTSS (579 aa). The 494-residue stretch at 32–525 folds into the Sema domain; sequence PPPLSVAPRD…FPRCVVRVPV (494 aa). N-linked (GlcNAc...) asparagine glycosylation is present at Asn75. Disulfide bonds link Cys117–Cys127 and Cys145–Cys154. N-linked (GlcNAc...) asparagine glycosylation is found at Asn156 and Asn292. Cystine bridges form between Cys268-Cys379 and Cys293-Cys338. N-linked (GlcNAc...) asparagine glycans are attached at residues Asn387, Asn442, and Asn463. 4 cysteine pairs are disulfide-bonded: Cys487/Cys519, Cys528/Cys546, Cys534/Cys580, and Cys538/Cys554. The helical transmembrane segment at 606–626 threads the bilayer; it reads VAAFVVGAVVSGFSVGWFVGL. The Cytoplasmic portion of the chain corresponds to 627–886; that stretch reads RERRELARRK…TGERTAPPVP (260 aa). Disordered regions lie at residues 655–677, 697–731, and 761–886; these read RLGE…PGGP, HGGP…AHAL, and EQPQ…PPVP. Residues 662–674 are compositionally biased toward gly residues; it reads TGPGGRGGAGGGP. Arg667 is modified (omega-N-methylarginine). Low complexity predominate over residues 707–718; that stretch reads LLPTPEQTPLPQ.

The protein belongs to the semaphorin family. In terms of assembly, homodimer. Binds specifically the SH3 domain of the protooncogene C-SRC. As to expression, in adulthood, it is expressed ubiquitously.

Its subcellular location is the cell membrane. In terms of biological role, functions as a cell surface repellent for mossy fibers of developing neurons in the hippocampus where it plays a role in axon guidance. May function through the PLXNA4 receptor expressed by mossy cell axons. The sequence is that of Semaphorin-6B (Sema6b) from Mus musculus (Mouse).